Consider the following 426-residue polypeptide: Tyrosine--tRNA ligase (426 aa).

Tyr-38 provides a ligand contact to L-tyrosine. The 'HIGH' region signature appears at 43–52 (PTADSLHIGS). L-tyrosine is bound by residues Tyr-176 and Gln-180. Positions 236–240 (KFGKT) match the 'KMSKS' region motif. Residue Lys-239 participates in ATP binding. One can recognise an S4 RNA-binding domain in the interval 359-426 (QTIVEVLTQS…KKLFNLYIWK (68 aa)).

This sequence belongs to the class-I aminoacyl-tRNA synthetase family. TyrS type 1 subfamily. Homodimer.

It localises to the cytoplasm. It catalyses the reaction tRNA(Tyr) + L-tyrosine + ATP = L-tyrosyl-tRNA(Tyr) + AMP + diphosphate + H(+). In terms of biological role, catalyzes the attachment of tyrosine to tRNA(Tyr) in a two-step reaction: tyrosine is first activated by ATP to form Tyr-AMP and then transferred to the acceptor end of tRNA(Tyr). The chain is Tyrosine--tRNA ligase from Aliivibrio salmonicida (strain LFI1238) (Vibrio salmonicida (strain LFI1238)).